Consider the following 272-residue polypeptide: Putative pyruvate, phosphate dikinase regulatory protein (272 aa).

151-158 (GISRTSKT) serves as a coordination point for ADP.

Belongs to the pyruvate, phosphate/water dikinase regulatory protein family. PDRP subfamily.

It carries out the reaction N(tele)-phospho-L-histidyl/L-threonyl-[pyruvate, phosphate dikinase] + ADP = N(tele)-phospho-L-histidyl/O-phospho-L-threonyl-[pyruvate, phosphate dikinase] + AMP + H(+). The catalysed reaction is N(tele)-phospho-L-histidyl/O-phospho-L-threonyl-[pyruvate, phosphate dikinase] + phosphate + H(+) = N(tele)-phospho-L-histidyl/L-threonyl-[pyruvate, phosphate dikinase] + diphosphate. Its function is as follows. Bifunctional serine/threonine kinase and phosphorylase involved in the regulation of the pyruvate, phosphate dikinase (PPDK) by catalyzing its phosphorylation/dephosphorylation. The polypeptide is Putative pyruvate, phosphate dikinase regulatory protein (Staphylococcus aureus (strain Mu3 / ATCC 700698)).